The primary structure comprises 560 residues: Cytosolic purine 5'-nucleotidase (560 aa).

The active-site Nucleophile is the aspartate 52. Aspartate 52 and aspartate 54 together coordinate IMP. 2 residues coordinate Mg(2+): aspartate 52 and aspartate 54. Aspartate 54 acts as the Proton donor in catalysis. Residues arginine 144 and asparagine 154 each coordinate ATP. IMP contacts are provided by arginine 202, aspartate 206, lysine 215, threonine 249, asparagine 250, serine 251, and lysine 292. Residue aspartate 351 participates in Mg(2+) binding. Serine 418 is subject to Phosphoserine. 2 residues coordinate ATP: glutamine 453 and arginine 456. Phosphoserine is present on residues serine 502, serine 511, and serine 527. Positions 541-560 (PQEITHCHDEDDDEEEEEEE) are disordered. Residues 548-560 (HDEDDDEEEEEEE) form a required for tetramer assembly region. Over residues 550–560 (EDDDEEEEEEE) the composition is skewed to acidic residues.

The protein belongs to the 5'(3')-deoxyribonucleotidase family. As to quaternary structure, homotetramer. Requires Mg(2+) as cofactor.

It is found in the cytoplasm. It localises to the cytosol. It catalyses the reaction a ribonucleoside 5'-phosphate + H2O = a ribonucleoside + phosphate. It carries out the reaction a 2'-deoxyribonucleoside + a ribonucleoside 5'-phosphate = a ribonucleoside + a 2'-deoxyribonucleoside 5'-phosphate. The enzyme catalyses IMP + H2O = inosine + phosphate. The catalysed reaction is GMP + H2O = guanosine + phosphate. It catalyses the reaction dGMP + H2O = 2'-deoxyguanosine + phosphate. It carries out the reaction dIMP + H2O = 2'-deoxyinosine + phosphate. The enzyme catalyses XMP + H2O = xanthosine + phosphate. The catalysed reaction is inosine + GMP = guanosine + IMP. It catalyses the reaction dGMP + inosine = 2'-deoxyguanosine + IMP. It carries out the reaction dIMP + inosine = 2'-deoxyinosine + IMP. The enzyme catalyses inosine + UMP = uridine + IMP. The catalysed reaction is inosine + CMP = cytidine + IMP. It catalyses the reaction inosine + AMP = IMP + adenosine. Its activity is regulated as follows. Allosterically activated by various compounds including ATP, 2,3-BPG/2,3-Bisphosphoglyceric acid and Ap4A/P1,P4-bis(5'-adenosyl) tetraphosphate. Binding of an allosteric activator is a prerequisiste to magnesium and substrate binding. Inhibited by inorganic phosphate. In terms of biological role, broad specificity cytosolic 5'-nucleotidase that catalyzes the dephosphorylation of 6-hydroxypurine nucleoside 5'-monophosphates. In addition, possesses a phosphotransferase activity by which it can transfer a phosphate from a donor nucleoside monophosphate to an acceptor nucleoside, preferably inosine, deoxyinosine and guanosine. Has the highest activities for IMP and GMP followed by dIMP, dGMP and XMP. Could also catalyze the transfer of phosphates from pyrimidine monophosphates but with lower efficiency. Through these activities regulates the purine nucleoside/nucleotide pools within the cell. The chain is Cytosolic purine 5'-nucleotidase from Mus musculus (Mouse).